The chain runs to 151 residues: Chaperonin GroEL (151 aa).

ATP is bound at residue D41–T45.

This sequence belongs to the chaperonin (HSP60) family. As to quaternary structure, forms a cylinder of 14 subunits composed of two heptameric rings stacked back-to-back. Interacts with the co-chaperonin GroES.

It is found in the cytoplasm. It carries out the reaction ATP + H2O + a folded polypeptide = ADP + phosphate + an unfolded polypeptide.. Functionally, together with its co-chaperonin GroES, plays an essential role in assisting protein folding. The GroEL-GroES system forms a nano-cage that allows encapsulation of the non-native substrate proteins and provides a physical environment optimized to promote and accelerate protein folding. This is Chaperonin GroEL from Mycobacteroides chelonae (Mycobacterium chelonae).